The primary structure comprises 360 residues: GDSL esterase/lipase At2g31550 (360 aa).

The N-terminal stretch at Met-1–Ala-27 is a signal peptide. Asn-26 carries N-linked (GlcNAc...) asparagine glycosylation. The active-site Nucleophile is Ser-42. Asn-104 and Asn-326 each carry an N-linked (GlcNAc...) asparagine glycan. Active-site residues include Asp-334 and His-337.

It belongs to the 'GDSL' lipolytic enzyme family.

Its subcellular location is the secreted. The protein is GDSL esterase/lipase At2g31550 of Arabidopsis thaliana (Mouse-ear cress).